A 133-amino-acid polypeptide reads, in one-letter code: ATP synthase epsilon chain, chloroplastic (133 aa).

This sequence belongs to the ATPase epsilon chain family. F-type ATPases have 2 components, CF(1) - the catalytic core - and CF(0) - the membrane proton channel. CF(1) has five subunits: alpha(3), beta(3), gamma(1), delta(1), epsilon(1). CF(0) has three main subunits: a, b and c.

Its subcellular location is the plastid. It localises to the chloroplast thylakoid membrane. In terms of biological role, produces ATP from ADP in the presence of a proton gradient across the membrane. In Helianthus annuus (Common sunflower), this protein is ATP synthase epsilon chain, chloroplastic.